We begin with the raw amino-acid sequence, 217 residues long: Large ribosomal subunit protein uL29m (217 aa).

It belongs to the universal ribosomal protein uL29 family. Component of the mitochondrial large ribosomal subunit. Mature mitochondrial ribosomes consist of a small (37S) and a large (54S) subunit. The 37S subunit contains at least 33 different proteins and 1 molecule of RNA (15S). The 54S subunit contains at least 45 different proteins and 1 molecule of RNA (21S).

It localises to the mitochondrion. In Aspergillus fumigatus (strain ATCC MYA-4609 / CBS 101355 / FGSC A1100 / Af293) (Neosartorya fumigata), this protein is Large ribosomal subunit protein uL29m (mrpl4).